The primary structure comprises 286 residues: Pantothenate synthetase (286 aa).

30-37 (MGNLHEGH) serves as a coordination point for ATP. The active-site Proton donor is the His37. Residue Gln64 participates in (R)-pantoate binding. Gln64 is a binding site for beta-alanine. Residue 151–154 (GKKD) coordinates ATP. Gln157 lines the (R)-pantoate pocket. Residues Leu180 and 188 to 191 (LSSR) contribute to the ATP site.

It belongs to the pantothenate synthetase family. As to quaternary structure, homodimer.

The protein localises to the cytoplasm. It catalyses the reaction (R)-pantoate + beta-alanine + ATP = (R)-pantothenate + AMP + diphosphate + H(+). The protein operates within cofactor biosynthesis; (R)-pantothenate biosynthesis; (R)-pantothenate from (R)-pantoate and beta-alanine: step 1/1. Catalyzes the condensation of pantoate with beta-alanine in an ATP-dependent reaction via a pantoyl-adenylate intermediate. The sequence is that of Pantothenate synthetase from Leptothrix cholodnii (strain ATCC 51168 / LMG 8142 / SP-6) (Leptothrix discophora (strain SP-6)).